The chain runs to 279 residues: MSTNNLDIKLNCNSSGQTIVTHQYTTHPLRLSGVFRLDTTDPRTAYLYLINTSPGLLAGDNLSLSLQLEKGTSVYLTDQAAIKVHAMPMTTTKANTNIKIKVEAGARLELVAEPIILFADAALEQTTYIQLHSRAELFWSEIILPGRLARGEWYEFRYYLSQLEITSMTEEICFRDAIHLEGKQNIFKHRDLFAAKPVLANLIVVQPHSDLEVLSQKLENLEAANCPDLLLGSSILPNNKGLLLRALASKTPQIKKYIKYALNCVRNLTNRSSLPYISK.

Belongs to the UreD family. As to quaternary structure, ureD, UreF and UreG form a complex that acts as a GTP-hydrolysis-dependent molecular chaperone, activating the urease apoprotein by helping to assemble the nickel containing metallocenter of UreC. The UreE protein probably delivers the nickel.

It localises to the cytoplasm. Its function is as follows. Required for maturation of urease via the functional incorporation of the urease nickel metallocenter. This Trichodesmium erythraeum (strain IMS101) protein is Urease accessory protein UreD.